A 430-amino-acid chain; its full sequence is MAFEFRLPDIGEGIHEGEIVKWFVKAGDTIEEDDVLAEVQNDKSVVEIPSPVSGTVEEVMVEEGTVAVVGDVIVKIDAPDAEDMQFKGHDDDSSSKEEPAKEEAPAEQAPVATQTEEVDENRTVKAMPSVRKYAREKGVNIKAVSGSGKNGRITKEDVDAYLNGGAPTASNESAASATNEEVAETPAAPAAVSLEGDFPETTEKIPAMRRAIAKAMVNSKHTAPHVTLMDEIDVQALWDHRKKFKEIAAEQGTKLTFLPYVVKALVSALKKYPALNTSFNEEAGEIVHKHYWNIGIAADTDRGLLVPVVKHADRKSIFQISDEINELAVKARDGKLTADEMKGATCTISNIGSAGGQWFTPVINHPEVAILGIGRIAQKPIVKDGEIVAAPVLALSLSFDHRQIDGATGQNAMNHIKRLLNNPELLLMEG.

The region spanning 2–77 (AFEFRLPDIG…VVGDVIVKID (76 aa)) is the Lipoyl-binding domain. At Lys43 the chain carries N6-lipoyllysine. Positions 80 to 122 (DAEDMQFKGHDDDSSSKEEPAKEEAPAEQAPVATQTEEVDENR) are disordered. Residues 84–104 (MQFKGHDDDSSSKEEPAKEEA) are compositionally biased toward basic and acidic residues. Residues 125-162 (KAMPSVRKYAREKGVNIKAVSGSGKNGRITKEDVDAYL) form the Peripheral subunit-binding (PSBD) domain. The segment at 165 to 199 (GAPTASNESAASATNEEVAETPAAPAAVSLEGDFP) is disordered. Positions 168-192 (TASNESAASATNEEVAETPAAPAAV) are enriched in low complexity. His401 is an active-site residue.

Belongs to the 2-oxoacid dehydrogenase family. In terms of assembly, forms a 24-polypeptide structural core with octahedral symmetry. It depends on (R)-lipoate as a cofactor.

The enzyme catalyses N(6)-[(R)-dihydrolipoyl]-L-lysyl-[protein] + acetyl-CoA = N(6)-[(R)-S(8)-acetyldihydrolipoyl]-L-lysyl-[protein] + CoA. In terms of biological role, the pyruvate dehydrogenase complex catalyzes the overall conversion of pyruvate to acetyl-CoA and CO(2). It contains multiple copies of three enzymatic components: pyruvate dehydrogenase (E1), dihydrolipoamide acetyltransferase (E2) and lipoamide dehydrogenase (E3). The chain is Dihydrolipoyllysine-residue acetyltransferase component of pyruvate dehydrogenase complex (pdhC) from Staphylococcus aureus (strain MRSA252).